Consider the following 485-residue polypeptide: Subtilisin-like protease 1 (485 aa).

The signal sequence occupies residues 1-19 (MGIFRFISISLAAVSAANA). Positions 20-116 (GHILSMGHAK…VEPDTTITIH (97 aa)) are excised as a propeptide. The 83-residue stretch at 34 to 116 (SYIVVMKDGT…VEPDTTITIH (83 aa)) folds into the Inhibitor I9 domain. Residues 126–400 (SWGLARISSQ…NILINNGDAK (275 aa)) enclose the Peptidase S8 domain. Residues aspartate 158 and histidine 190 each act as charge relay system in the active site. N-linked (GlcNAc...) asparagine glycosylation is present at asparagine 251. Serine 345 acts as the Charge relay system in catalysis. A compositionally biased stretch (polar residues) spans 377–394 (GTSSVTNPGPGTRTNILI). The interval 377–462 (GTSSVTNPGP…HTPFPNDDFN (86 aa)) is disordered. Residues 409–418 (PSQPPKPSQP) are compositionally biased toward pro residues. Over residues 419 to 428 (SKPQQPSEPQ) the composition is skewed to low complexity. Positions 433 to 455 (PQEPAPGQPAPAPAPVPQHPHTP) are enriched in pro residues.

It belongs to the peptidase S8 family.

Its subcellular location is the secreted. Secreted subtilisin-like serine protease with keratinolytic activity that contributes to pathogenicity. The protein is Subtilisin-like protease 1 (SUB1) of Arthroderma otae (Microsporum canis).